A 137-amino-acid polypeptide reads, in one-letter code: Small ribosomal subunit protein uS12 (137 aa).

The tract at residues Met-1–Ala-23 is disordered. Position 102 is a 3-methylthioaspartic acid (Asp-102).

It belongs to the universal ribosomal protein uS12 family. As to quaternary structure, part of the 30S ribosomal subunit. Contacts proteins S8 and S17. May interact with IF1 in the 30S initiation complex.

In terms of biological role, with S4 and S5 plays an important role in translational accuracy. Functionally, interacts with and stabilizes bases of the 16S rRNA that are involved in tRNA selection in the A site and with the mRNA backbone. Located at the interface of the 30S and 50S subunits, it traverses the body of the 30S subunit contacting proteins on the other side and probably holding the rRNA structure together. The combined cluster of proteins S8, S12 and S17 appears to hold together the shoulder and platform of the 30S subunit. This is Small ribosomal subunit protein uS12 from Levilactobacillus brevis (strain ATCC 367 / BCRC 12310 / CIP 105137 / JCM 1170 / LMG 11437 / NCIMB 947 / NCTC 947) (Lactobacillus brevis).